The primary structure comprises 305 residues: UDP-3-O-acyl-N-acetylglucosamine deacetylase (305 aa).

Positions 79, 238, and 242 each coordinate Zn(2+). Histidine 265 functions as the Proton donor in the catalytic mechanism.

Belongs to the LpxC family. The cofactor is Zn(2+).

The catalysed reaction is a UDP-3-O-[(3R)-3-hydroxyacyl]-N-acetyl-alpha-D-glucosamine + H2O = a UDP-3-O-[(3R)-3-hydroxyacyl]-alpha-D-glucosamine + acetate. It participates in glycolipid biosynthesis; lipid IV(A) biosynthesis; lipid IV(A) from (3R)-3-hydroxytetradecanoyl-[acyl-carrier-protein] and UDP-N-acetyl-alpha-D-glucosamine: step 2/6. Catalyzes the hydrolysis of UDP-3-O-myristoyl-N-acetylglucosamine to form UDP-3-O-myristoylglucosamine and acetate, the committed step in lipid A biosynthesis. The chain is UDP-3-O-acyl-N-acetylglucosamine deacetylase from Sodalis glossinidius (strain morsitans).